The primary structure comprises 242 residues: Triosephosphate isomerase (242 aa).

Position 9-11 (9-11 (NWK)) interacts with substrate. The Electrophile role is filled by His-90. Glu-162 (proton acceptor) is an active-site residue. Substrate-binding positions include Gly-168, Ser-205, and 226-227 (GG).

Belongs to the triosephosphate isomerase family. Homodimer.

The protein resides in the cytoplasm. The catalysed reaction is D-glyceraldehyde 3-phosphate = dihydroxyacetone phosphate. Its pathway is carbohydrate biosynthesis; gluconeogenesis. It participates in carbohydrate degradation; glycolysis; D-glyceraldehyde 3-phosphate from glycerone phosphate: step 1/1. Involved in the gluconeogenesis. Catalyzes stereospecifically the conversion of dihydroxyacetone phosphate (DHAP) to D-glyceraldehyde-3-phosphate (G3P). The polypeptide is Triosephosphate isomerase (Azoarcus sp. (strain BH72)).